Reading from the N-terminus, the 278-residue chain is 4-hydroxy-tetrahydrodipicolinate reductase (278 aa).

NAD(+)-binding positions include 16 to 21 (GAGGRM) and Glu42. Arg43 lines the NADP(+) pocket. NAD(+) contacts are provided by residues 106–108 (GTT) and 130–133 (AGNY). His163 (proton donor/acceptor) is an active-site residue. Residue His164 coordinates (S)-2,3,4,5-tetrahydrodipicolinate. The active-site Proton donor is the Lys167. Position 173–174 (173–174 (GT)) interacts with (S)-2,3,4,5-tetrahydrodipicolinate.

Belongs to the DapB family.

The protein resides in the cytoplasm. The enzyme catalyses (S)-2,3,4,5-tetrahydrodipicolinate + NAD(+) + H2O = (2S,4S)-4-hydroxy-2,3,4,5-tetrahydrodipicolinate + NADH + H(+). It carries out the reaction (S)-2,3,4,5-tetrahydrodipicolinate + NADP(+) + H2O = (2S,4S)-4-hydroxy-2,3,4,5-tetrahydrodipicolinate + NADPH + H(+). The protein operates within amino-acid biosynthesis; L-lysine biosynthesis via DAP pathway; (S)-tetrahydrodipicolinate from L-aspartate: step 4/4. Its function is as follows. Catalyzes the conversion of 4-hydroxy-tetrahydrodipicolinate (HTPA) to tetrahydrodipicolinate. The polypeptide is 4-hydroxy-tetrahydrodipicolinate reductase (Psychrobacter arcticus (strain DSM 17307 / VKM B-2377 / 273-4)).